A 1220-amino-acid polypeptide reads, in one-letter code: MGKKQKNKSEDSTKDDIDLDALAAEIEGAGAAKEQEPQKSKGKKKKEKKKQDFDEDDILKELEELSLEAQGIKADRETVAVKPTENNEEEFTSKDKKKKGQKGKKQSFDDNDSEELEDKDSKSKKTAKPKVEMYSGSDDDDDFNKLPKKAKGKAQKSNKKWDGSEEDEDNSKKIKERSRINSSGESGDESDEFLQSRKGQKKNQKNKPGPNIESGNEDDDASFKIKTVAQKKAEKKERERKKRDEEKAKLRKLKEKEELETGKKDQSKQKESQRKFEEETVKSKVTVDTGVIPASEEKAETPTAAEDDNEGDKKKKDKKKKKGEKEEKEKEKKKGPSKATVKAMQEALAKLKEEEERQKREEEERIKRLEELEAKRKEEERLEQEKRERKKQKEKERKERLKKEGKLLTKSQREARARAEATLKLLQAQGVEVPSKDSLPKKRPIYEDKKRKKIPQQLESKEVSESMELCAAVEVMEQGVPEKEETPPPVEPEEEEDTEDAGLDDWEAMASDEETEKVEGNKVHIEVKENPEEEEEEEEEEEEDEESEEEEEEEGESEGSEGDEEDEKVSDEKDSGKTLDKKPSKEMSSDSEYDSDDDRTKEERAYDKAKRRIEKRRLEHSKNVNTEKLRAPIICVLGHVDTGKTKILDKLRHTHVQDGEAGGITQQIGATNVPLEAINEQTKMIKNFDRENVRIPGMLIIDTPGHESFSNLRNRGSSLCDIAILVVDIMHGLEPQTIESINLLKSKKCPFIVALNKIDRLYDWKKSPDSDVAATLKKQKKNTKDEFEERAKAIIVEFAQQGLNAALFYENKDPRTFVSLVPTSAHTGDGMGSLIYLLVELTQTMLSKRLAHCEELRAQVMEVKALPGMGTTIDVILINGRLKEGDTIIVPGVEGPIVTQIRGLLLPPPMKELRVKNQYEKHKEVEAAQGVKILGKDLEKTLAGLPLLVAYKEDEIPVLKDELIHELKQTLNAIKLEEKGVYVQASTLGSLEALLEFLKTSEVPYAGINIGPVHKKDVMKASVMLEHDPQYAVILAFDVRIERDAQEMADSLGVRIFSAEIIYHLFDAFTKYRQDYKKQKQEEFKHIAVFPCKIKILPQYIFNSRDPIVMGVTVEAGQVKQGTPMCVPSKNFVDIGIVTSIEINHKQVDVAKKGQEVCVKIEPIPGESPKMFGRHFEATDILVSKISRQSIDALKDWFRDEMQKSDWQLIVELKKVFEII.

Disordered regions lie at residues 1-417 (MGKK…EARA) and 430-608 (GVEV…AYDK). The segment covering 7–16 (NKSEDSTKDD) has biased composition (basic and acidic residues). A compositionally biased stretch (low complexity) spans 20–32 (DALAAEIEGAGAA). Position 66 is a phosphoserine (Ser66). Over residues 95–105 (DKKKKGQKGKK) the composition is skewed to basic residues. A phosphoserine mark is found at Ser107 and Ser113. The segment covering 109 to 118 (DDNDSEELED) has biased composition (acidic residues). Residue Tyr134 is modified to Phosphotyrosine. Phosphoserine occurs at positions 135 and 137. A compositionally biased stretch (basic residues) spans 146-158 (LPKKAKGKAQKSN). 8 positions are modified to phosphoserine: Ser164, Ser171, Ser182, Ser183, Ser186, Ser190, Ser214, and Ser222. The span at 170–179 (NSKKIKERSR) shows a compositional bias: basic and acidic residues. The segment covering 231–282 (KKAEKKERERKKRDEEKAKLRKLKEKEELETGKKDQSKQKESQRKFEEETVK) has biased composition (basic and acidic residues). Phosphothreonine is present on Thr301. Basic and acidic residues-rich tracts occupy residues 323 to 334 (GEKEEKEKEKKK), 349 to 417 (AKLK…EARA), and 434 to 449 (PSKD…YEDK). Ser438 bears the Phosphoserine mark. Over residues 491–516 (EPEEEEDTEDAGLDDWEAMASDEETE) the composition is skewed to acidic residues. The residue at position 498 (Thr498) is a Phosphothreonine. Positions 517–530 (KVEGNKVHIEVKEN) are enriched in basic and acidic residues. A compositionally biased stretch (acidic residues) spans 531–569 (PEEEEEEEEEEEEDEESEEEEEEEGESEGSEGDEEDEKV). Phosphoserine is present on residues Ser547, Ser557, Ser560, Ser588, Ser589, Ser591, and Ser595. Basic and acidic residues predominate over residues 570 to 588 (SDEKDSGKTLDKKPSKEMS). Over residues 598 to 608 (DRTKEERAYDK) the composition is skewed to basic and acidic residues. Positions 629-846 (LRAPIICVLG…LLVELTQTML (218 aa)) constitute a tr-type G domain. A G1 region spans residues 638–645 (GHVDTGKT). Residues 640–646 (VDTGKTK) and 663–665 (GIT) contribute to the GTP site. The segment at 663–667 (GITQQ) is G2. Positions 702–705 (DTPG) are G3. The active site involves His706. GTP-binding positions include 756 to 757 (NK), 759 to 760 (DR), and 825 to 826 (AH). The G4 stretch occupies residues 756-759 (NKID). The tract at residues 824 to 826 (SAH) is G5. Ser1168 bears the Phosphoserine mark.

Belongs to the TRAFAC class translation factor GTPase superfamily. Classic translation factor GTPase family. IF-2 subfamily. In terms of assembly, interacts through its C-terminal domain (CTD) with the CTD of eIF1A (EIF1AX) or with the CTD of EIF5 (mutually exclusive) through a common binding site. Interacts with eIF1A (EIF1AX) from the location of the start codon by the 43S complex until the formation of the 80S complex. Interacts with ANXA5 in a calcium and phospholipid-dependent manner. Requires a monovalent cation as cofactor. In terms of processing, (Microbial infection) Cleaved and inactivated by the protease 3C of poliovirus, Coxsackievirus B3 and Human rhinovirus 14, allowing the virus to shutoff the host cell translation.

The protein resides in the cytoplasm. It catalyses the reaction GTP + H2O = GDP + phosphate + H(+). Functionally, plays a role in translation initiation. Ribosome-dependent GTPase that promotes the joining of the 60S ribosomal subunit to the pre-initiation complex to form the 80S initiation complex with the initiator methionine-tRNA in the P-site base paired to the start codon. Together with eIF1A (EIF1AX), actively orients the initiator methionine-tRNA in a conformation that allows 60S ribosomal subunit joining to form the 80S initiation complex. Is released after formation of the 80S initiation complex. Its GTPase activity is not essential for ribosomal subunits joining, but GTP hydrolysis is needed for eIF1A (EIF1AX) ejection quickly followed by EIF5B release to form elongation-competent ribosomes. In contrast to its procaryotic homolog, does not promote recruitment of Met-rRNA to the small ribosomal subunit. The protein is Eukaryotic translation initiation factor 5B (EIF5B) of Homo sapiens (Human).